The following is a 541-amino-acid chain: Lysosomal cobalamin transport escort protein LMBD1 (541 aa).

The Extracellular segment spans residues 1 to 11 (MATPVALLSES). The helical transmembrane segment at 12–31 (VLGWSIFTVVLLVILAFCWV) threads the bilayer. The Cytoplasmic segment spans residues 32–50 (YIRKYQSRQESEVISTITA). Residues 51–71 (ICALAIALITSALLPVDIFLV) traverse the membrane as a helical segment. The Extracellular portion of the chain corresponds to 72–101 (SFMKHPNGTYKEWAANNETRVQIEDTVLYG). 2 N-linked (GlcNAc...) asparagine glycosylation sites follow: Asn78 and Asn88. Residues 102–122 (YYTLYSIILFCVFLWIPFVYF) traverse the membrane as a helical segment. Residues 123–145 (YYEEKDEDNNNKCLQVKNALKYT) are Cytoplasmic-facing. A helical transmembrane segment spans residues 146 to 166 (IGFVIVCSALLLIGTFVPLAS). The Extracellular portion of the chain corresponds to 167–189 (PPNQNSTQWQKVQYLFEELGSSH). N-linked (GlcNAc...) asparagine glycosylation occurs at Asn171. A helical transmembrane segment spans residues 190 to 210 (GLAALSFSISSLTLIGMLAVI). Residues 211–306 (TYTAYGMSVL…KVGSALRPMK (96 aa)) are Cytoplasmic-facing. The helical transmembrane segment at 307 to 327 (ILLGVFFILVALLFFVTLFIS) threads the bilayer. The Extracellular portion of the chain corresponds to 328 to 365 (NLDKALHSAGISTGFIIFGTNLTNPLNELLLALQPVFP). N-linked (GlcNAc...) asparagine glycosylation is present at Asn348. A helical membrane pass occupies residues 366–386 (LDYVLITVITMYFVFTSMAGI). Residues 387–409 (RNMGIWFFWIRLYKIRPQRTRPQ) lie on the Cytoplasmic side of the membrane. Residues 410–430 (ALLFLCMILLLIVLHTSYMIY) traverse the membrane as a helical segment. The Extracellular segment spans residues 431 to 488 (SLAPQYVMYGSQKYLLQTPLPTAVPSQSNRSATITKICDADAPEDQCTVTRSYLFLHK). An N-linked (GlcNAc...) asparagine glycan is attached at Asn459. Residues 489 to 509 (FWFFSTIYYFGNWAFLGVFLI) form a helical membrane-spanning segment. The Cytoplasmic portion of the chain corresponds to 510–541 (GLVVSCCKGKKSVIEGEVDADDSDFSDDEYVH).

The protein belongs to the LIMR family. LMBRD1 subfamily.

It is found in the endoplasmic reticulum membrane. The protein localises to the lysosome membrane. The protein resides in the cell membrane. Lysosomal membrane chaperone required to export cobalamin (vitamin B12) from the lysosome to the cytosol, allowing its conversion to cofactors. Targets ABCD4 transporter from the endoplasmic reticulum to the lysosome. Then forms a complex with lysosomal ABCD4 and cytoplasmic MMACHC to transport cobalamin across the lysosomal membrane. May play a role in mediating and regulating the internalization of the insulin receptor. This is Lysosomal cobalamin transport escort protein LMBD1 (lmbrd1) from Danio rerio (Zebrafish).